A 163-amino-acid polypeptide reads, in one-letter code: Photosystem II extrinsic protein V (163 aa).

The signal sequence occupies residues 1–26; sequence MFKTYSKSFACILFCIFNIFVVSASA. Heme c-binding residues include cysteine 63, cysteine 66, histidine 67, and methionine 130.

It belongs to the cytochrome c family. PsbV subfamily. PSII is composed of 1 copy each of membrane proteins PsbA, PsbB, PsbC, PsbD, PsbE, PsbF, PsbH, PsbI, PsbJ, PsbK, PsbL, PsbM, PsbT, PsbY, PsbZ, Psb30/Ycf12, at least 3 peripheral proteins of the oxygen-evolving complex and a large number of cofactors. It forms dimeric complexes. Heme c serves as cofactor.

The protein localises to the plastid. The protein resides in the chloroplast thylakoid membrane. In terms of biological role, one of the extrinsic, lumenal subunits of photosystem II (PSII). PSII is a light-driven water plastoquinone oxidoreductase, using light energy to abstract electrons from H(2)O, generating a proton gradient subsequently used for ATP formation. The extrinsic proteins stabilize the structure of photosystem II oxygen-evolving complex (OEC), the ion environment of oxygen evolution and protect the OEC against heat-induced inactivation. The polypeptide is Photosystem II extrinsic protein V (Thalassiosira pseudonana (Marine diatom)).